The primary structure comprises 986 residues: P3N-PIPO polyprotein (986 aa).

One can recognise a Peptidase S30 domain in the interval Lys141 to Phe284. Catalysis depends on for P1 proteinase activity residues His192, Asp201, and Ser235. The short motif at Lys334 to Cys337 is the Involved in interaction with stylet and aphid transmission element. The short motif at Pro592–Lys594 is the Involved in virions binding and aphid transmission element. Residues Leu618–Gly740 enclose the Peptidase C6 domain. Catalysis depends on for helper component proteinase activity residues Cys626 and His699.

It belongs to the potyviridae P3N-PIPO polyprotein family. Interacts (via PIPO domain) with host PCaP1 protein; this interaction may help to anchor the movement complex to the plasma membrane from which the complex could move to the plasmodesmata. Post-translationally, potyviral RNA is expressed as two polyproteins which undergo post-translational proteolytic processing. Genome polyprotein is processed by NIa-pro, P1 and HC-pro proteinases resulting in the production of at least ten individual proteins. P3N-PIPO is cleaved by P1 and HC-pro proteinases resulting in the production of three individual proteins. The P1 proteinase and the HC-pro cleave only their respective C-termini autocatalytically.

Its subcellular location is the host cell junction. The protein localises to the host plasmodesma. The catalysed reaction is Hydrolyzes a Gly-|-Gly bond at its own C-terminus, commonly in the sequence -Tyr-Xaa-Val-Gly-|-Gly, in the processing of the potyviral polyprotein.. In terms of biological role, required for aphid transmission and also has proteolytic activity. Only cleaves a Gly-Gly dipeptide at its own C-terminus. Interacts with virions and aphid stylets. Acts as a suppressor of RNA-mediated gene silencing, also known as post-transcriptional gene silencing (PTGS), a mechanism of plant viral defense that limits the accumulation of viral RNAs. May have RNA-binding activity. Functionally, allows efficient cell to cell propagation, by bypassing the host cell wall barrier. Transports viral genome to neighboring plant cells directly through plasmosdesmata, without any budding. The protein is P3N-PIPO polyprotein of Capsicum (peppers).